The primary structure comprises 563 residues: Arginine--tRNA ligase (563 aa).

The 'HIGH' region signature appears at 122–132; that stretch reads PNIAKPMSMGH.

This sequence belongs to the class-I aminoacyl-tRNA synthetase family. As to quaternary structure, monomer.

Its subcellular location is the cytoplasm. It carries out the reaction tRNA(Arg) + L-arginine + ATP = L-arginyl-tRNA(Arg) + AMP + diphosphate. In Levilactobacillus brevis (strain ATCC 367 / BCRC 12310 / CIP 105137 / JCM 1170 / LMG 11437 / NCIMB 947 / NCTC 947) (Lactobacillus brevis), this protein is Arginine--tRNA ligase.